A 609-amino-acid chain; its full sequence is Arginine--tRNA ligase (609 aa).

The 'HIGH' region motif lies at 132–142 (ANPTSSLHVGH).

The protein belongs to the class-I aminoacyl-tRNA synthetase family. As to quaternary structure, monomer.

The protein resides in the cytoplasm. The enzyme catalyses tRNA(Arg) + L-arginine + ATP = L-arginyl-tRNA(Arg) + AMP + diphosphate. The sequence is that of Arginine--tRNA ligase from Psychrobacter arcticus (strain DSM 17307 / VKM B-2377 / 273-4).